We begin with the raw amino-acid sequence, 449 residues long: MLSVAILAAGKGTRMESSIPKVLHKISGKSLLQRVIDSCVELNPDQIFVITGHKSKEVQESIPDNKKIHFVIQEPQSGTGHAIQILCREVKKNEGKLLVLNGDVPLITPETLKNLLNLHDSKNADVSLITTKKKNPHGYGRVFLKGDFIERIVEEKDCNNQERLNLLINAGVYCFNWENLSEIISTLQSNNNQNEIYLTDTVSMLKNALSLEIEDNGELQGINNRIQLSKCEEIIQNSIKEKHMLNGVTFINQASCSISEEAEIGKDVIIEANTHIRGSTKIFNSCVIGPNTFIENSNIGLHCEISNSTVYDSQIMDHIKVGPYSHIRPKSKIYSYSKIGNFVEIKNSQLEEESKVNHLSYIGDSIIGRSTNIGAGTITANFDGQKKHQTKIGKNSSIGANTVLVAPINLGESVTTGAGSVITKDSKDNSLAISRTKQVNIDNWERKKP.

Residues 1-225 (MLSVAILAAG…NGELQGINNR (225 aa)) are pyrophosphorylase. Residues 7–10 (LAAG), Lys21, Gln73, and 78–79 (GT) each bind UDP-N-acetyl-alpha-D-glucosamine. Asp103 provides a ligand contact to Mg(2+). UDP-N-acetyl-alpha-D-glucosamine is bound by residues Gly140, Glu154, Asn169, and Asn223. Asn223 lines the Mg(2+) pocket. A linker region spans residues 226-246 (IQLSKCEEIIQNSIKEKHMLN). The tract at residues 247 to 449 (GVTFINQASC…NIDNWERKKP (203 aa)) is N-acetyltransferase. Residues Arg328 and Lys346 each coordinate UDP-N-acetyl-alpha-D-glucosamine. The active-site Proton acceptor is His358. Positions 361 and 372 each coordinate UDP-N-acetyl-alpha-D-glucosamine. Ala375, Ala418, and Arg435 together coordinate acetyl-CoA.

In the N-terminal section; belongs to the N-acetylglucosamine-1-phosphate uridyltransferase family. This sequence in the C-terminal section; belongs to the transferase hexapeptide repeat family. As to quaternary structure, homotrimer. Mg(2+) is required as a cofactor.

The protein localises to the cytoplasm. It carries out the reaction alpha-D-glucosamine 1-phosphate + acetyl-CoA = N-acetyl-alpha-D-glucosamine 1-phosphate + CoA + H(+). It catalyses the reaction N-acetyl-alpha-D-glucosamine 1-phosphate + UTP + H(+) = UDP-N-acetyl-alpha-D-glucosamine + diphosphate. It functions in the pathway nucleotide-sugar biosynthesis; UDP-N-acetyl-alpha-D-glucosamine biosynthesis; N-acetyl-alpha-D-glucosamine 1-phosphate from alpha-D-glucosamine 6-phosphate (route II): step 2/2. The protein operates within nucleotide-sugar biosynthesis; UDP-N-acetyl-alpha-D-glucosamine biosynthesis; UDP-N-acetyl-alpha-D-glucosamine from N-acetyl-alpha-D-glucosamine 1-phosphate: step 1/1. It participates in bacterial outer membrane biogenesis; LPS lipid A biosynthesis. In terms of biological role, catalyzes the last two sequential reactions in the de novo biosynthetic pathway for UDP-N-acetylglucosamine (UDP-GlcNAc). The C-terminal domain catalyzes the transfer of acetyl group from acetyl coenzyme A to glucosamine-1-phosphate (GlcN-1-P) to produce N-acetylglucosamine-1-phosphate (GlcNAc-1-P), which is converted into UDP-GlcNAc by the transfer of uridine 5-monophosphate (from uridine 5-triphosphate), a reaction catalyzed by the N-terminal domain. This Prochlorococcus marinus (strain MIT 9312) protein is Bifunctional protein GlmU.